A 266-amino-acid polypeptide reads, in one-letter code: Hydroxyacylglutathione hydrolase (266 aa).

The Zn(2+) site is built by H53, H55, D57, H58, H118, D140, and H178.

The protein belongs to the metallo-beta-lactamase superfamily. Glyoxalase II family. Monomer. Zn(2+) serves as cofactor.

It carries out the reaction an S-(2-hydroxyacyl)glutathione + H2O = a 2-hydroxy carboxylate + glutathione + H(+). It participates in secondary metabolite metabolism; methylglyoxal degradation; (R)-lactate from methylglyoxal: step 2/2. In terms of biological role, thiolesterase that catalyzes the hydrolysis of S-D-lactoyl-glutathione to form glutathione and D-lactic acid. In Cupriavidus metallidurans (strain ATCC 43123 / DSM 2839 / NBRC 102507 / CH34) (Ralstonia metallidurans), this protein is Hydroxyacylglutathione hydrolase.